We begin with the raw amino-acid sequence, 171 residues long: MSSWILLAHAETSGFGLNLDLFETNLINLAIIIGLLVYAGRGFLGNLLSNRRAAIEAEIREVEEKLASSAQALSQAQTQLKEAEAEAARLLVEAKARAAAVRQEILDKAAADVERLKATAAQDVSTEQQRVLDELRRYAVAQALSRVETQLSQQLDEAAQQRLIDRSLATL.

A helical membrane pass occupies residues 26–48 (LINLAIIIGLLVYAGRGFLGNLL).

It belongs to the ATPase B chain family. In terms of assembly, F-type ATPases have 2 components, F(1) - the catalytic core - and F(0) - the membrane proton channel. F(1) has five subunits: alpha(3), beta(3), gamma(1), delta(1), epsilon(1). F(0) has four main subunits: a(1), b(1), b'(1) and c(10-14). The alpha and beta chains form an alternating ring which encloses part of the gamma chain. F(1) is attached to F(0) by a central stalk formed by the gamma and epsilon chains, while a peripheral stalk is formed by the delta, b and b' chains.

The protein localises to the cellular thylakoid membrane. Functionally, f(1)F(0) ATP synthase produces ATP from ADP in the presence of a proton or sodium gradient. F-type ATPases consist of two structural domains, F(1) containing the extramembraneous catalytic core and F(0) containing the membrane proton channel, linked together by a central stalk and a peripheral stalk. During catalysis, ATP synthesis in the catalytic domain of F(1) is coupled via a rotary mechanism of the central stalk subunits to proton translocation. In terms of biological role, component of the F(0) channel, it forms part of the peripheral stalk, linking F(1) to F(0). The protein is ATP synthase subunit b of Synechococcus elongatus (strain ATCC 33912 / PCC 7942 / FACHB-805) (Anacystis nidulans R2).